Consider the following 99-residue polypeptide: Integration host factor subunit alpha (99 aa).

It belongs to the bacterial histone-like protein family. Heterodimer of an alpha and a beta chain.

This protein is one of the two subunits of integration host factor, a specific DNA-binding protein that functions in genetic recombination as well as in transcriptional and translational control. The polypeptide is Integration host factor subunit alpha (ihfA) (Xanthomonas axonopodis pv. citri (strain 306)).